The primary structure comprises 288 residues: Heme oxygenase 1 (288 aa).

Residues 1–265 lie on the Cytoplasmic side of the membrane; that stretch reads MERPQPDSMP…KTPLNTHSQA (265 aa). Residues Lys-18, His-25, Tyr-134, and Arg-183 each coordinate heme b. Residues 223 to 260 form a disordered region; it reads HDTKDQSPSRAPGLRQRASNKAQDSAPVETPRGKTPLN. Ser-229 is subject to Phosphoserine. A helical; Anchor for type IV membrane protein transmembrane segment spans residues 266–288; that stretch reads PLLRWVLTLSFLVATVAVGLYAM.

This sequence belongs to the heme oxygenase family. Homodimer and higher order homooligomer. Oligomerization is crucial for its stability and function in the endoplasmic reticulum. Interacts with FLVCR2; this interaction is potentiated in the presence of heme. Post-translationally, a soluble form arises by proteolytic removal of the membrane anchor.

The protein resides in the endoplasmic reticulum membrane. The enzyme catalyses heme b + 3 reduced [NADPH--hemoprotein reductase] + 3 O2 = biliverdin IXalpha + CO + Fe(2+) + 3 oxidized [NADPH--hemoprotein reductase] + 3 H2O + H(+). Catalyzes the oxidative cleavage of heme at the alpha-methene bridge carbon, released as carbon monoxide (CO), to generate biliverdin IXalpha, while releasing the central heme iron chelate as ferrous iron. Affords protection against programmed cell death and this cytoprotective effect relies on its ability to catabolize free heme and prevent it from sensitizing cells to undergo apoptosis. Its function is as follows. Catalyzes the oxidative cleavage of heme at the alpha-methene bridge carbon, released as carbon monoxide (CO), to generate biliverdin IXalpha, while releasing the central heme iron chelate as ferrous iron. This Pongo abelii (Sumatran orangutan) protein is Heme oxygenase 1 (HMOX1).